The sequence spans 203 residues: Small ribosomal subunit protein uS7B (203 aa).

This sequence belongs to the universal ribosomal protein uS7 family. In terms of assembly, component of the small ribosomal subunit (SSU). Mature yeast ribosomes consist of a small (40S) and a large (60S) subunit. The 40S small subunit contains 1 molecule of ribosomal RNA (18S rRNA) and at least 33 different proteins. The large 60S subunit contains 3 rRNA molecules (25S, 5.8S and 5S rRNA) and at least 46 different proteins.

It is found in the cytoplasm. In terms of biological role, component of the ribosome, a large ribonucleoprotein complex responsible for the synthesis of proteins in the cell. The small ribosomal subunit (SSU) binds messenger RNAs (mRNAs) and translates the encoded message by selecting cognate aminoacyl-transfer RNA (tRNA) molecules. The large subunit (LSU) contains the ribosomal catalytic site termed the peptidyl transferase center (PTC), which catalyzes the formation of peptide bonds, thereby polymerizing the amino acids delivered by tRNAs into a polypeptide chain. The nascent polypeptides leave the ribosome through a tunnel in the LSU and interact with protein factors that function in enzymatic processing, targeting, and the membrane insertion of nascent chains at the exit of the ribosomal tunnel. This Schizosaccharomyces pombe (strain 972 / ATCC 24843) (Fission yeast) protein is Small ribosomal subunit protein uS7B (rps502).